A 90-amino-acid chain; its full sequence is Putative sodium channel toxin Ts28 (90 aa).

The N-terminal stretch at 1 to 23 (MKISLVTWLITALCLMEIEEIDG) is a signal peptide. The region spanning 26-86 (PGNYPVDFQG…FWDVMKKQCD (61 aa)) is the LCN-type CS-alpha/beta domain. 3 cysteine pairs are disulfide-bonded: C40/C60, C46/C65, and C50/C67.

This sequence belongs to the long (3 C-C) scorpion toxin superfamily. Monomer (edited version) and heterodimer (non-edited version) of this alpha chain and a beta chain (AC P0CI43). In terms of tissue distribution, expressed by the venom gland.

The protein resides in the secreted. Functionally, the edited BmKBTx-like may modulate voltage-gated sodium channels (Nav). Its function is as follows. The non-edited form is able to form a heterodimer. In orthologs, a heterodimer with LVP beta-chain induces lipolysis in rat adipocytes, which is mediated through the beta-2 adrenergic receptor pathway (ADRB2). Since no LVP beta-chains have been identified in the venom of this scorpion, it is possible that this protein is not involved in a lipolysis process. This Tityus serrulatus (Brazilian scorpion) protein is Putative sodium channel toxin Ts28.